The sequence spans 189 residues: Protein Rex (189 aa).

Basic residues predominate over residues 1–16 (MPKTRRGPRRSQRKRP). The interval 1–26 (MPKTRRGPRRSQRKRPPTPWPTSQGL) is disordered. The short motif at 2–18 (PKTRRGPRRSQRKRPPT) is the Nuclear localization signal, and RNA-binding (RxRE) element. The segment at 56–70 (RPAYIVTPYWPPVQS) is homomultimerization. Ser70 bears the Phosphoserine; by host mark. Positions 82 to 93 (LSAQLYSSLSLG) match the Nuclear export signal motif. The interval 87 to 189 (YSSLSLGSPP…PPSPGPSCPR (103 aa)) is disordered. Over residues 115 to 125 (IQPPTFHPPSS) the composition is skewed to pro residues. Positions 123 to 131 (PSSRPYANT) are homomultimerization. At Thr174 the chain carries Phosphothreonine; by host. Ser177 carries the phosphoserine; by host modification. Positions 178-189 (FPPPSPGPSCPR) are enriched in pro residues.

It belongs to the deltaretrovirus Rex protein family. In terms of assembly, homomultimer. Multimeric assembly is essential for activity and involves XPO1. Binds to human XPO1 and KPNB1. Interacts (via N-terminal nuclear localization signal) with human NPM1. Phosphorylated.

Its subcellular location is the host nucleus. It is found in the host nucleolus. It localises to the host cytoplasm. Functionally, rex escorts unspliced gag-pro-pol and singly spliced env mRNAs out of the nucleus of infected cells. These mRNAs carry a recognition sequence called Rex responsive element (RxRE or XRE) located at the 3' region of the long terminal repeat (LTR). This function is essential since most HTLV proteins are translated from unspliced or partially spliced pre-mRNAs that cannot exit the nucleus by the pathway used by fully processed cellular mRNAs. Rex itself is translated from a fully spliced mRNA that probably readily exits the nucleus. Rex's nuclear localization signal (NLS) binds directly to KPNB1/importin beta-1 without previous binding to KPNA1/importin alpha-1. KPNB1 binds to the GDP bound form of RAN (Ran-GDP) and targets Rex to the nucleus. In the nucleus, the conversion from Ran-GDP to Ran-GTP dissociates Rex from KPNB1 and allows Rex's binding to the RRE in viral pre-mRNAs. Rex multimerizes on the RRE via cooperative assembly. This multimerization is critical for its full biological activity, since it may shield the viral RNA from being spliced or down-regulated, and probably exposes Rex's nuclear export signal (NES) to the surface. Rex can then form a complex with XPO1/CRM1, RANBP3 and Ran-GTP, leading to nuclear export of the complex. Conversion from Ran-GTP to Ran-GDP mediates dissociation of the Rex/RRE/XPO1/RANBP3/RAN complex, so that Rex can return to the nucleus for a subsequent round of export. The chain is Protein Rex from Homo sapiens (Human).